A 488-amino-acid polypeptide reads, in one-letter code: Glutamyl-tRNA(Gln) amidotransferase subunit A (488 aa).

Active-site charge relay system residues include K77 and S152. S176 acts as the Acyl-ester intermediate in catalysis.

This sequence belongs to the amidase family. GatA subfamily. Heterotrimer of A, B and C subunits.

It carries out the reaction L-glutamyl-tRNA(Gln) + L-glutamine + ATP + H2O = L-glutaminyl-tRNA(Gln) + L-glutamate + ADP + phosphate + H(+). Its function is as follows. Allows the formation of correctly charged Gln-tRNA(Gln) through the transamidation of misacylated Glu-tRNA(Gln) in organisms which lack glutaminyl-tRNA synthetase. The reaction takes place in the presence of glutamine and ATP through an activated gamma-phospho-Glu-tRNA(Gln). The chain is Glutamyl-tRNA(Gln) amidotransferase subunit A from Latilactobacillus sakei subsp. sakei (strain 23K) (Lactobacillus sakei subsp. sakei).